The sequence spans 468 residues: Fibrinogen beta chain (468 aa).

Residue glutamine 1 is modified to Pyrrolidone carboxylic acid. Over residues 1 to 10 (QFPTDYDEGQ) the composition is skewed to acidic residues. Residues 1–54 (QFPTDYDEGQDDRPKVGLGARGHRPYDKKKEEAPSLRPVPPPISGGGYRARPAT) form a disordered region. Residue threonine 4 is glycosylated (O-linked (GalNAc...) threonine). Residue tyrosine 6 is modified to Sulfotyrosine. Positions 24–34 (RPYDKKKEEAP) are enriched in basic and acidic residues. Residues 88–204 (KLQDTLVRQE…TQMEYCRTPC (117 aa)) are a coiled coil. Cystine bridges form between cysteine 208/cysteine 293 and cysteine 218/cysteine 247. A Fibrinogen C-terminal domain is found at 209–465 (NIPVVSGKEC…KMSMKIRPYF (257 aa)). N-linked (GlcNAc...) asparagine glycosylation is present at asparagine 371. A disulfide bridge links cysteine 401 with cysteine 414.

As to quaternary structure, heterohexamer; disulfide linked. Contains 2 sets of 3 non-identical chains (alpha, beta and gamma). The 2 heterotrimers are in head to head conformation with the N-termini in a small central domain. Post-translationally, conversion of fibrinogen to fibrin is triggered by thrombin, which cleaves fibrinopeptides A and B from alpha and beta chains, and thus exposes the N-terminal polymerization sites responsible for the formation of the soft clot. The soft clot is converted into the hard clot by factor XIIIA which catalyzes the epsilon-(gamma-glutamyl)lysine cross-linking between gamma chains (stronger) and between alpha chains (weaker) of different monomers. As to expression, detected in blood plasma (at protein level).

Its subcellular location is the secreted. Functionally, cleaved by the protease thrombin to yield monomers which, together with fibrinogen alpha (FGA) and fibrinogen gamma (FGG), polymerize to form an insoluble fibrin matrix. Fibrin has a major function in hemostasis as one of the primary components of blood clots. In addition, functions during the early stages of wound repair to stabilize the lesion and guide cell migration during re-epithelialization. Was originally thought to be essential for platelet aggregation, based on in vitro studies using anticoagulated blood. However subsequent studies have shown that it is not absolutely required for thrombus formation in vivo. Enhances expression of SELP in activated platelets. Maternal fibrinogen is essential for successful pregnancy. Fibrin deposition is also associated with infection, where it protects against IFNG-mediated hemorrhage. May also facilitate the antibacterial immune response via both innate and T-cell mediated pathways. The protein is Fibrinogen beta chain (FGB) of Bos taurus (Bovine).